Reading from the N-terminus, the 358-residue chain is Phospho-N-acetylmuramoyl-pentapeptide-transferase (358 aa).

The next 9 membrane-spanning stretches (helical) occupy residues 13–35 (LLIL…IFIG), 81–101 (MGGV…NINL), 106–126 (LFLL…DDFL), 142–162 (FFLQ…KDLI), 171–191 (SWQI…LVGI), 201–221 (LDGL…TEIL), 228–248 (LIIF…FLKY), 268–290 (ILGS…GIFI), and 336–356 (IVEN…VLKI).

It belongs to the glycosyltransferase 4 family. MraY subfamily. It depends on Mg(2+) as a cofactor.

The protein localises to the cell inner membrane. It carries out the reaction UDP-N-acetyl-alpha-D-muramoyl-L-alanyl-gamma-D-glutamyl-meso-2,6-diaminopimeloyl-D-alanyl-D-alanine + di-trans,octa-cis-undecaprenyl phosphate = di-trans,octa-cis-undecaprenyl diphospho-N-acetyl-alpha-D-muramoyl-L-alanyl-D-glutamyl-meso-2,6-diaminopimeloyl-D-alanyl-D-alanine + UMP. It functions in the pathway cell wall biogenesis; peptidoglycan biosynthesis. Catalyzes the initial step of the lipid cycle reactions in the biosynthesis of the cell wall peptidoglycan: transfers peptidoglycan precursor phospho-MurNAc-pentapeptide from UDP-MurNAc-pentapeptide onto the lipid carrier undecaprenyl phosphate, yielding undecaprenyl-pyrophosphoryl-MurNAc-pentapeptide, known as lipid I. The polypeptide is Phospho-N-acetylmuramoyl-pentapeptide-transferase (Prochlorococcus marinus (strain MIT 9312)).